The chain runs to 413 residues: Divalent metal cation transporter MntH (413 aa).

The Cytoplasmic portion of the chain corresponds to 1–19 (MTDNRVENSSGRAARKLRL). The helical transmembrane segment at 20-39 (ALMGPAFIAAIGYIDPGNFA) threads the bilayer. The Periplasmic segment spans residues 40 to 51 (TNIQAGASFGYQ). The chain crosses the membrane as a helical span at residues 52-71 (LLWVVVWANLMAMLIQILSA). Residues 72–95 (KLGIATGKNLAEQIRDHYPRPVVW) are Cytoplasmic-facing. The chain crosses the membrane as a helical span at residues 96–118 (FYWVQAEIIAMATDLAEFIGAAI). The Periplasmic portion of the chain corresponds to 119-125 (GFKLILG). A helical transmembrane segment spans residues 126–145 (VSLLQGAVLTGIATFLILML). Residues 146–155 (QRRGQKPLEK) lie on the Cytoplasmic side of the membrane. The chain crosses the membrane as a helical span at residues 156-175 (VIGGLLLFVAAAYIVELFFS). Residues 176-196 (QPDMAQLGKGMVIPALPNPEA) are Periplasmic-facing. Residues 197 to 220 (VFLAAGVLGATIMPHVIYLHSSLT) form a helical membrane-spanning segment. The Cytoplasmic portion of the chain corresponds to 221 to 238 (QHLHGGTRQQRYSATKWD). Residues 239-258 (VAIAMTIAGFVNLAMMATAA) traverse the membrane as a helical segment. Topologically, residues 259-276 (AAFHFSGHTGIADLDQAY) are periplasmic. The helical transmembrane segment at 277-297 (LTLEPLLSHAAATVFGLSLVA) threads the bilayer. Residues 298–327 (AGLSSTVVGTLAGQVVMQGFVRFHIPLWVR) are Cytoplasmic-facing. A helical transmembrane segment spans residues 328-344 (RSITMLPSFIVILMGLD). The Periplasmic portion of the chain corresponds to 345-350 (PTRILV). The chain crosses the membrane as a helical span at residues 351 to 370 (MSQVLLSFGIALALVPLLIF). At 371–387 (TSNATLMGELVNTRRVK) the chain is on the cytoplasmic side. The helical transmembrane segment at 388-406 (QIGWIIVVLVVALNIWLLV) threads the bilayer. Topologically, residues 407–413 (GTVMGLS) are periplasmic.

It belongs to the NRAMP family.

It localises to the cell inner membrane. In terms of biological role, h(+)-stimulated, divalent metal cation uptake system. The protein is Divalent metal cation transporter MntH of Salmonella gallinarum (strain 287/91 / NCTC 13346).